The primary structure comprises 258 residues: L-aspartate dehydrogenase 1 (258 aa).

2 residues coordinate NAD(+): Ala121 and Asn181. His211 is an active-site residue.

It belongs to the L-aspartate dehydrogenase family.

The enzyme catalyses L-aspartate + NADP(+) + H2O = oxaloacetate + NH4(+) + NADPH + H(+). The catalysed reaction is L-aspartate + NAD(+) + H2O = oxaloacetate + NH4(+) + NADH + H(+). Its pathway is cofactor biosynthesis; NAD(+) biosynthesis; iminoaspartate from L-aspartate (dehydrogenase route): step 1/1. In terms of biological role, specifically catalyzes the NAD or NADP-dependent dehydrogenation of L-aspartate to iminoaspartate. The protein is L-aspartate dehydrogenase 1 of Bordetella pertussis (strain Tohama I / ATCC BAA-589 / NCTC 13251).